The primary structure comprises 67 residues: uncharacterized protein (67 aa).

The next 2 helical transmembrane spans lie at 6–26 (GQLW…CVLM) and 38–58 (NNII…IIII).

The protein localises to the membrane. This is an uncharacterized protein from Dictyostelium discoideum (Social amoeba).